Here is a 337-residue protein sequence, read N- to C-terminus: Peroxidase 14 (337 aa).

The N-terminal stretch at 1-22 is a signal peptide; the sequence is MARIGSFLILLSLTYALTLCIC. Residue asparagine 24 is glycosylated (N-linked (GlcNAc...) asparagine). Disulfide bonds link cysteine 44–cysteine 124, cysteine 77–cysteine 82, cysteine 130–cysteine 331, and cysteine 209–cysteine 241. The active-site Proton acceptor is histidine 75. Residues aspartate 76, valine 79, glycine 81, aspartate 83, and serine 85 each contribute to the Ca(2+) site. Proline 172 contributes to the substrate binding site. An N-linked (GlcNAc...) asparagine glycan is attached at asparagine 191. Heme b is bound at residue histidine 202. Threonine 203 contributes to the Ca(2+) binding site. N-linked (GlcNAc...) asparagine glycosylation is found at asparagine 218 and asparagine 249. 3 residues coordinate Ca(2+): aspartate 254, serine 257, and aspartate 262.

This sequence belongs to the peroxidase family. Classical plant (class III) peroxidase subfamily. The cofactor is heme b. Requires Ca(2+) as cofactor.

Its subcellular location is the secreted. The enzyme catalyses 2 a phenolic donor + H2O2 = 2 a phenolic radical donor + 2 H2O. Its function is as follows. Removal of H(2)O(2), oxidation of toxic reductants, biosynthesis and degradation of lignin, suberization, auxin catabolism, response to environmental stresses such as wounding, pathogen attack and oxidative stress. These functions might be dependent on each isozyme/isoform in each plant tissue. This is Peroxidase 14 (PER14) from Arabidopsis thaliana (Mouse-ear cress).